A 151-amino-acid polypeptide reads, in one-letter code: UPF0756 membrane protein LBA0919 (151 aa).

Transmembrane regions (helical) follow at residues 4-24 (WLFL…SLII), 52-72 (WGVT…QIGF), 78-98 (TFKT…AVLS), and 115-135 (LVLG…GPVI).

It belongs to the UPF0756 family.

The protein resides in the cell membrane. This Lactobacillus acidophilus (strain ATCC 700396 / NCK56 / N2 / NCFM) protein is UPF0756 membrane protein LBA0919.